Reading from the N-terminus, the 192-residue chain is uncharacterized protein (192 aa).

Transmembrane regions (helical) follow at residues 31–51 and 119–139; these read IVET…YVYE and VPGA…LWEI.

Its subcellular location is the cell membrane. This is an uncharacterized protein from Thermotoga maritima (strain ATCC 43589 / DSM 3109 / JCM 10099 / NBRC 100826 / MSB8).